We begin with the raw amino-acid sequence, 457 residues long: Cysteine--tRNA ligase (457 aa).

C28 provides a ligand contact to Zn(2+). Positions 30–40 match the 'HIGH' region motif; the sequence is PTVYDTAHIGN. Residues C212, H237, and E241 each coordinate Zn(2+). The short motif at 270–274 is the 'KMSKS' region element; that stretch reads KMSKS. Position 273 (K273) interacts with ATP.

Belongs to the class-I aminoacyl-tRNA synthetase family. Monomer. It depends on Zn(2+) as a cofactor.

The protein resides in the cytoplasm. The enzyme catalyses tRNA(Cys) + L-cysteine + ATP = L-cysteinyl-tRNA(Cys) + AMP + diphosphate. The sequence is that of Cysteine--tRNA ligase from Wolbachia sp. subsp. Drosophila simulans (strain wRi).